The sequence spans 219 residues: Acetylxylan esterase (219 aa).

The active-site Nucleophile is S15. Residues D191 and H194 each act as charge relay system in the active site.

This sequence belongs to the 'GDSL' lipolytic enzyme family. Homooctamer, presenting a unique donut-shaped quaternary structure built of two staggered tetrameric rings. The eight active sites are organized in four closely situated pairs, which face the relatively wide internal cavity.

The protein localises to the cytoplasm. It catalyses the reaction Deacetylation of xylans and xylo-oligosaccharides.. The protein operates within glycan degradation; xylan degradation. Functionally, acetylxylan esterase involved in the degradation of xylan, a major structural heterogeneous polysaccharide found in plant biomass representing the second most abundant polysaccharide in the biosphere, after cellulose. Cleaves acetyl side groups from the xylose backbone units of the hemicellulolytic polymer xylan and xylo-oligosaccharides. Hydrolyzes about 20%-30% of the available acetyl groups on fully acetylated birch wood xylan. Completely deacetylates xylobiose peracetate (fully acetylated), and is active on both the alpha- and beta-forms of the sugar. Also hydrolyzes fully acetylated methyl-beta-D-xylopyranoside and methyl-beta-D-glucopyranoside, and the synthetic substrates 2-naphthyl acetate, 4-nitrophenyl acetate, 4-methylumbelliferyl acetate, and phenyl acetate. The polypeptide is Acetylxylan esterase (Geobacillus stearothermophilus (Bacillus stearothermophilus)).